Here is a 300-residue protein sequence, read N- to C-terminus: Neutral protease NprE (300 aa).

Aspartate 139 provides a ligand contact to Ca(2+). Histidine 143 provides a ligand contact to Zn(2+). The active site involves glutamate 144. 2 residues coordinate Zn(2+): histidine 147 and glutamate 167. Residues aspartate 178, aspartate 181, aspartate 183, and glutamate 186 each contribute to the Ca(2+) site. Catalysis depends on histidine 228, which acts as the Proton donor.

This sequence belongs to the peptidase M4 family. Requires Ca(2+) as cofactor. Zn(2+) is required as a cofactor.

Its subcellular location is the secreted. It carries out the reaction Similar, but not identical, to that of thermolysin.. Its function is as follows. Extracellular zinc metalloprotease. The sequence is that of Neutral protease NprE (nprE) from Bacillus pumilus (Bacillus mesentericus).